A 63-amino-acid chain; its full sequence is Large ribosomal subunit protein uL29 (63 aa).

Belongs to the universal ribosomal protein uL29 family.

This is Large ribosomal subunit protein uL29 from Yersinia pseudotuberculosis serotype O:1b (strain IP 31758).